The chain runs to 531 residues: Na(+)/H(+) antiporter NhaB (531 aa).

12 helical membrane passes run 13–33 (FLGK…IINP), 34–54 (LVFF…EFIF), 90–110 (LVAN…IYFM), 121–141 (ILIG…TAAF), 145–165 (FLDA…FYAI), 206–226 (LLMH…VGEP), 242–262 (FIIR…LTCV), 308–328 (VIAV…GLIG), 352–372 (EEAL…AVII), 394–414 (LALF…VFVG), 456–476 (GQAA…QLSY), and 482–502 (MALP…SFLL).

This sequence belongs to the NhaB Na(+)/H(+) (TC 2.A.34) antiporter family.

The protein resides in the cell inner membrane. It carries out the reaction 2 Na(+)(in) + 3 H(+)(out) = 2 Na(+)(out) + 3 H(+)(in). Na(+)/H(+) antiporter that extrudes sodium in exchange for external protons. The protein is Na(+)/H(+) antiporter NhaB of Aliivibrio salmonicida (strain LFI1238) (Vibrio salmonicida (strain LFI1238)).